A 711-amino-acid polypeptide reads, in one-letter code: Protein mono-ADP-ribosyltransferase PARP12 (711 aa).

3 C3H1-type zinc fingers span residues 103–128 (LCKFLIYGNCKFLKTGKNCRNGHNLK), 164–188 (ICLHYNKGDGPFGSCSFQKQCIKLH), and 189–211 (ICQYFLQGECKFGTSCKRSHEFT). The tract at residues 247 to 279 (SALSKVSPSPAGPQGSSERKDSSGPVSPGTPSQ) is disordered. Serine 268 carries the post-translational modification Phosphoserine. C3H1-type zinc fingers lie at residues 280-307 (EESEQICLYHIRKSCSFQEKCHRVHFHL) and 281-306 (ESEQICLYHIRKSCSFQEKCHRVHFH). WWE domains follow at residues 308-371 (PYRW…RLST) and 374-468 (SVTK…KVCR). At cysteine 484 the chain carries ADP-ribosylcysteine. The region spanning 494–708 (IPDYWDPAAL…IFVALGNLFT (215 aa)) is the PARP catalytic domain. ADP-ribosyl aspartic acid is present on residues aspartate 610 and aspartate 621.

Belongs to the ARTD/PARP family. As to quaternary structure, interacts with PARP11; this interaction plays a key role in zika virus suppression. Interacts with ISG15. Auto-mono-ADP-ribosylated. In terms of processing, phosphorylated by PRKD1.

The protein resides in the nucleus. It is found in the golgi apparatus. It localises to the trans-Golgi network. The protein localises to the cytoplasm. Its subcellular location is the stress granule. The catalysed reaction is L-aspartyl-[protein] + NAD(+) = 4-O-(ADP-D-ribosyl)-L-aspartyl-[protein] + nicotinamide. It catalyses the reaction L-cysteinyl-[protein] + NAD(+) = S-(ADP-D-ribosyl)-L-cysteinyl-[protein] + nicotinamide + H(+). Its function is as follows. Mono-ADP-ribosyltransferase that mediates mono-ADP-ribosylation of target proteins. Displays anti-alphavirus activity during IFN-gamma immune activation by directly ADP-ribosylating the alphaviral non-structural proteins nsP3 and nsP4. Acts as a component of the PRKD1-driven regulatory cascade that selectively controls a major branch of the basolateral transport pathway by catalyzing the MARylation of GOLGA1. Acts also as a key regulator of mitochondrial function, protein translation, and inflammation. Inhibits PINK1/Parkin-dependent mitophagy and promotes cartilage degeneration by inhibiting the ubiquitination and SUMOylation of MFN1/2 by upregulating ISG15 and ISGylation. The chain is Protein mono-ADP-ribosyltransferase PARP12 from Mus musculus (Mouse).